A 146-amino-acid chain; its full sequence is Meiotically up-regulated gene 151 protein (146 aa).

The interval 1 to 40 is disordered; that stretch reads MSLVAYDSEEEEQTSLVNENNDIKGRSEEPHWKIPNSPKA. Residues 21-32 are compositionally biased toward basic and acidic residues; it reads NDIKGRSEEPHW.

It is found in the nucleus. In terms of biological role, has a role in meiosis. This chain is Meiotically up-regulated gene 151 protein (mug151), found in Schizosaccharomyces pombe (strain 972 / ATCC 24843) (Fission yeast).